The following is a 270-amino-acid chain: 3-methyl-2-oxobutanoate hydroxymethyltransferase (270 aa).

D50 and D89 together coordinate Mg(2+). 3-methyl-2-oxobutanoate is bound by residues 50-51, D89, and K118; that span reads DS. E120 provides a ligand contact to Mg(2+). E187 functions as the Proton acceptor in the catalytic mechanism.

It belongs to the PanB family. Homodecamer; pentamer of dimers. It depends on Mg(2+) as a cofactor.

It localises to the cytoplasm. It carries out the reaction 3-methyl-2-oxobutanoate + (6R)-5,10-methylene-5,6,7,8-tetrahydrofolate + H2O = 2-dehydropantoate + (6S)-5,6,7,8-tetrahydrofolate. It functions in the pathway cofactor biosynthesis; (R)-pantothenate biosynthesis; (R)-pantoate from 3-methyl-2-oxobutanoate: step 1/2. In terms of biological role, catalyzes the reversible reaction in which hydroxymethyl group from 5,10-methylenetetrahydrofolate is transferred onto alpha-ketoisovalerate to form ketopantoate. This Helicobacter pylori (strain HPAG1) protein is 3-methyl-2-oxobutanoate hydroxymethyltransferase.